Consider the following 345-residue polypeptide: Olfactory receptor 11G2 (345 aa).

Residues 1–62 are Extracellular-facing; sequence MHFLSQNDLN…LGFPCPREGQ (62 aa). An N-linked (GlcNAc...) asparagine glycan is attached at asparagine 43. The helical transmembrane segment at 63 to 83 threads the bilayer; that stretch reads ILLFVLFTVVYLLTLMGNGSI. Over 84-92 the chain is Cytoplasmic; it reads ICAVHWDQR. Residues 93–113 form a helical membrane-spanning segment; sequence LHAPMYILLANFSFLEICYVT. Topologically, residues 114-135 are extracellular; it reads STVPSMLANFLSDTKIISFSGC. An intrachain disulfide couples cysteine 135 to cysteine 217. The chain crosses the membrane as a helical span at residues 136 to 156; it reads FLQFYFFFSLGSTECFFLAVM. The Cytoplasmic portion of the chain corresponds to 157–181; sequence AFDRYLAICRPLRYPTIMTRRLCTN. The chain crosses the membrane as a helical span at residues 182–202; it reads LVVNCWVLGFIWFLIPIVNIS. Residues 203-241 are Extracellular-facing; it reads QMSFCGSRIIDHFLCDPAPLLTLTCKKGPVIELVFSVLS. A helical transmembrane segment spans residues 242 to 264; that stretch reads PLPVFMLFLFIVGSYALVVRAVL. Residues 265–275 lie on the Cytoplasmic side of the membrane; that stretch reads RVPSAAGRRKA. A helical membrane pass occupies residues 276–296; the sequence is FSTCGSHLAVVSLFYGSVLVM. Residues 297–309 are Extracellular-facing; sequence YGSPPSKNEAGKQ. The helical transmembrane segment at 310–330 threads the bilayer; the sequence is KTVTLFYSVVTPLLNPVIYSL. At 331–345 the chain is on the cytoplasmic side; it reads RNKDMRKALKKFWGT.

Belongs to the G-protein coupled receptor 1 family.

The protein localises to the cell membrane. Its function is as follows. Odorant receptor. In Homo sapiens (Human), this protein is Olfactory receptor 11G2 (OR11G2).